A 239-amino-acid polypeptide reads, in one-letter code: Cysteine-rich venom protein 2 (239 aa).

An N-terminal signal peptide occupies residues 1 to 19; it reads MIALIVLPILAAVLQQSSG. Residues 38–166 enclose the SCP domain; sequence VDLHNSLRRS…EYSYFYVCQY (129 aa). Disulfide bonds link Cys-75-Cys-153, Cys-92-Cys-167, Cys-148-Cys-164, Cys-186-Cys-193, Cys-189-Cys-198, Cys-202-Cys-234, and Cys-219-Cys-232. Positions 198-234 constitute a ShKT domain; the sequence is CTNPCPKKISTQLPRFGPQAGCQDKQMQSDCSATCFC.

The protein belongs to the CRISP family. As to expression, expressed by the venom gland.

Its subcellular location is the secreted. Its function is as follows. Weakly blocks contraction of smooth muscle elicited by high potassium-induced depolarization, but does not block caffeine-stimulated contraction. May target voltage-gated calcium channels on smooth muscle. The sequence is that of Cysteine-rich venom protein 2 from Sistrurus catenatus edwardsii (Desert massasauga).